Reading from the N-terminus, the 191-residue chain is Ribonuclease HII (191 aa).

Positions 4–191 (YTAAGLDEVG…HRKTFLSKIQ (188 aa)) constitute an RNase H type-2 domain. A divalent metal cation-binding residues include Asp10, Glu11, and Asp106.

The protein belongs to the RNase HII family. The cofactor is Mn(2+). It depends on Mg(2+) as a cofactor.

It is found in the cytoplasm. It carries out the reaction Endonucleolytic cleavage to 5'-phosphomonoester.. Functionally, endonuclease that specifically degrades the RNA of RNA-DNA hybrids. The chain is Ribonuclease HII from Prochlorococcus marinus (strain SARG / CCMP1375 / SS120).